The following is a 151-amino-acid chain: Large ribosomal subunit protein bL9 (151 aa).

The protein belongs to the bacterial ribosomal protein bL9 family.

Its function is as follows. Binds to the 23S rRNA. The polypeptide is Large ribosomal subunit protein bL9 (Acidobacterium capsulatum (strain ATCC 51196 / DSM 11244 / BCRC 80197 / JCM 7670 / NBRC 15755 / NCIMB 13165 / 161)).